We begin with the raw amino-acid sequence, 511 residues long: U3 snoRNP-associated protein-like YAOH (511 aa).

The segment covering 1–18 has biased composition (basic residues); sequence MAPRPRKRVSRPKPRATS. Residues 1–117 form a disordered region; sequence MAPRPRKRVS…EDEDEGEEAG (117 aa). 2 stretches are compositionally biased toward acidic residues: residues 44–53 and 66–80; these read EDIESEDSDL and DDGE…EQET. A compositionally biased stretch (basic and acidic residues) spans 81–105; that stretch reads AGEKKMRIAKELLKKVTDAARRRRE. WD repeat units follow at residues 158 to 197, 217 to 256, 259 to 298, 301 to 339, 342 to 380, 412 to 451, and 457 to 497; these read KHRQ…SEKY, KRSK…HIQA, GHRG…YMNC, GHQN…QLLF, PATA…PTHI, SAQS…KGIR, and RLDG…QNGV.

This sequence belongs to the WD repeat RRP9 family.

It is found in the nucleus. Its subcellular location is the nucleolus. Component of a nucleolar small nuclear ribonucleoprotein particle (snoRNP) thought to participate in the processing and modification of pre-ribosomal RNA. Essential for embryogenesis. The polypeptide is U3 snoRNP-associated protein-like YAOH (Oryza sativa subsp. japonica (Rice)).